We begin with the raw amino-acid sequence, 831 residues long: Translation initiation factor IF-2 (831 aa).

The 171-residue stretch at 329–499 (TRAPVVTVMG…LLISEMQDLK (171 aa)) folds into the tr-type G domain. The segment at 338–345 (GHVDHGKT) is G1. 338 to 345 (GHVDHGKT) lines the GTP pocket. The interval 363–367 (GITQH) is G2. A G3 region spans residues 385-388 (DTPG). Residues 385-389 (DTPGH) and 439-442 (NKID) contribute to the GTP site. Residues 439–442 (NKID) form a G4 region. A G5 region spans residues 475–477 (SAL).

The protein belongs to the TRAFAC class translation factor GTPase superfamily. Classic translation factor GTPase family. IF-2 subfamily.

The protein resides in the cytoplasm. Functionally, one of the essential components for the initiation of protein synthesis. Protects formylmethionyl-tRNA from spontaneous hydrolysis and promotes its binding to the 30S ribosomal subunits. Also involved in the hydrolysis of GTP during the formation of the 70S ribosomal complex. This chain is Translation initiation factor IF-2, found in Rickettsia typhi (strain ATCC VR-144 / Wilmington).